A 230-amino-acid chain; its full sequence is Cytidylate kinase (230 aa).

ATP is bound at residue 16 to 24 (GPASAGKST).

This sequence belongs to the cytidylate kinase family. Type 1 subfamily.

Its subcellular location is the cytoplasm. The enzyme catalyses CMP + ATP = CDP + ADP. The catalysed reaction is dCMP + ATP = dCDP + ADP. The chain is Cytidylate kinase from Lactobacillus johnsonii (strain CNCM I-12250 / La1 / NCC 533).